The chain runs to 151 residues: Large ribosomal subunit protein eL19 (151 aa).

The segment covering 57–81 (KKGISSARVKKLKEQRKKGRRRGPG) has biased composition (basic residues). Residues 57–95 (KKGISSARVKKLKEQRKKGRRRGPGSRRGAAGARTPPKE) are disordered.

This sequence belongs to the eukaryotic ribosomal protein eL19 family. In terms of assembly, part of the 50S ribosomal subunit.

In terms of biological role, binds to the 23S rRNA. This Methanocaldococcus jannaschii (strain ATCC 43067 / DSM 2661 / JAL-1 / JCM 10045 / NBRC 100440) (Methanococcus jannaschii) protein is Large ribosomal subunit protein eL19.